Consider the following 219-residue polypeptide: 7-cyano-7-deazaguanine synthase (219 aa).

10-20 is a binding site for ATP; sequence FSGGQDSTTCL. Zn(2+)-binding residues include Cys-187, Cys-196, Cys-199, and Cys-202.

It belongs to the QueC family. As to quaternary structure, homodimer. Zn(2+) serves as cofactor.

The enzyme catalyses 7-carboxy-7-deazaguanine + NH4(+) + ATP = 7-cyano-7-deazaguanine + ADP + phosphate + H2O + H(+). Its pathway is purine metabolism; 7-cyano-7-deazaguanine biosynthesis. In terms of biological role, catalyzes the ATP-dependent conversion of 7-carboxy-7-deazaguanine (CDG) to 7-cyano-7-deazaguanine (preQ(0)). This chain is 7-cyano-7-deazaguanine synthase, found in Lysinibacillus sphaericus (strain C3-41).